Reading from the N-terminus, the 553-residue chain is CTP synthase (553 aa).

The tract at residues 1-266 (MTKNYIFITG…DNYICEYFKL (266 aa)) is amidoligase domain. Position 14 (Ser-14) interacts with CTP. Ser-14 lines the UTP pocket. ATP is bound by residues 15–20 (SLGKGI) and Asp-72. Residues Asp-72 and Glu-140 each contribute to the Mg(2+) site. CTP contacts are provided by residues 147–149 (DIE), 187–192 (KTKPTQ), and Lys-223. UTP-binding positions include 187–192 (KTKPTQ) and Lys-223. 239–241 (KDV) lines the ATP pocket. Residues 291–544 (IIGIIGKYIK…IKSAKKNKKN (254 aa)) enclose the Glutamine amidotransferase type-1 domain. Gly-352 provides a ligand contact to L-glutamine. Cys-379 serves as the catalytic Nucleophile; for glutamine hydrolysis. Residues 380 to 383 (LGMQ), Glu-403, and Arg-472 contribute to the L-glutamine site. Residues His-517 and Glu-519 contribute to the active site.

The protein belongs to the CTP synthase family. Homotetramer.

The enzyme catalyses UTP + L-glutamine + ATP + H2O = CTP + L-glutamate + ADP + phosphate + 2 H(+). It carries out the reaction L-glutamine + H2O = L-glutamate + NH4(+). The catalysed reaction is UTP + NH4(+) + ATP = CTP + ADP + phosphate + 2 H(+). It participates in pyrimidine metabolism; CTP biosynthesis via de novo pathway; CTP from UDP: step 2/2. Allosterically activated by GTP, when glutamine is the substrate; GTP has no effect on the reaction when ammonia is the substrate. The allosteric effector GTP functions by stabilizing the protein conformation that binds the tetrahedral intermediate(s) formed during glutamine hydrolysis. Inhibited by the product CTP, via allosteric rather than competitive inhibition. Functionally, catalyzes the ATP-dependent amination of UTP to CTP with either L-glutamine or ammonia as the source of nitrogen. Regulates intracellular CTP levels through interactions with the four ribonucleotide triphosphates. This chain is CTP synthase, found in Buchnera aphidicola subsp. Schizaphis graminum (strain Sg).